A 141-amino-acid chain; its full sequence is Auxin-responsive protein SAUR61 (141 aa).

Belongs to the ARG7 family.

The protein resides in the cell membrane. Its function is as follows. May promote auxin-stimulated organ elongation, such as hypocotyls, stamen filaments and petals. This is Auxin-responsive protein SAUR61 from Arabidopsis thaliana (Mouse-ear cress).